We begin with the raw amino-acid sequence, 263 residues long: MARGPKKHLKRVAAPKHWMLDKLTGVFAPRPSTGPHKLRECLPLIIFLRNRLKYALTGDEVKKICMQRFIKIDGKVRTDITYPAGFMDVISIDKTGENFRLIYDTKGRFAVHRITSEEAKYKLCKVRKIFVGTKGIPHLVTHDARTIRYPDPLIKVNDTIQIDLETGKITDFIKFDTGNLCMVTGGANLGRIGVITNRERHPGSFDVVHVKDANGNSFATRLSNIFVIGKGNKPWISLPRGKGIRLTIAEERDKRLAAKQSSG.

The S4 RNA-binding domain occupies 42 to 104; sequence LPLIIFLRNR…TGENFRLIYD (63 aa).

The protein belongs to the eukaryotic ribosomal protein eS4 family.

This is Small ribosomal subunit protein eS4 (RPS4) from Cricetulus griseus (Chinese hamster).